The primary structure comprises 706 residues: Termination factor NPH-I homolog (706 aa).

The 166-residue stretch at Ile-62–Arg-227 folds into the Helicase ATP-binding domain. His-75–Thr-82 contributes to the ATP binding site. The DEAH box motif lies at Asp-168–His-171. Positions Gln-417–Leu-599 constitute a Helicase C-terminal domain.

This sequence belongs to the DEAD box helicase family. DEAH subfamily. As to quaternary structure, part of the viral DNA-directed RNA polymerase that consists of 8 polII-like subunits (RPB1, RPB2, RPB3, RPB5, RPB6, RPB7, RPB9, RPB10), a capping enzyme and a termination factor.

It localises to the virion. Its function is as follows. Putative DNA-dependent ATPase required for providing the needed energy to achieve the termination of early transcripts. This chain is Termination factor NPH-I homolog, found in Ornithodoros (relapsing fever ticks).